Consider the following 92-residue polypeptide: DNA/RNA-binding protein Alba (92 aa).

An N6-acetyllysine modification is found at Lys11.

Belongs to the histone-like Alba family. Post-translationally, acetylated. Acetylation at Lys-11 decreases DNA-binding affinity.

Its subcellular location is the cytoplasm. It is found in the chromosome. Its function is as follows. Binds double-stranded DNA tightly but without sequence specificity. Involved in DNA compaction. The chain is DNA/RNA-binding protein Alba from Pyrobaculum aerophilum (strain ATCC 51768 / DSM 7523 / JCM 9630 / CIP 104966 / NBRC 100827 / IM2).